The following is a 398-amino-acid chain: Nicotinate phosphoribosyltransferase (398 aa).

Residue His-214 is modified to Phosphohistidine; by autocatalysis.

Belongs to the NAPRTase family. Post-translationally, transiently phosphorylated on a His residue during the reaction cycle. Phosphorylation strongly increases the affinity for substrates and increases the rate of nicotinate D-ribonucleotide production. Dephosphorylation regenerates the low-affinity form of the enzyme, leading to product release.

It carries out the reaction nicotinate + 5-phospho-alpha-D-ribose 1-diphosphate + ATP + H2O = nicotinate beta-D-ribonucleotide + ADP + phosphate + diphosphate. The protein operates within cofactor biosynthesis; NAD(+) biosynthesis; nicotinate D-ribonucleotide from nicotinate: step 1/1. Its function is as follows. Catalyzes the synthesis of beta-nicotinate D-ribonucleotide from nicotinate and 5-phospho-D-ribose 1-phosphate at the expense of ATP. In Xanthomonas campestris pv. campestris (strain 8004), this protein is Nicotinate phosphoribosyltransferase.